Consider the following 593-residue polypeptide: ATP-dependent lipid A-core flippase (593 aa).

Helical transmembrane passes span 33–55, 67–87, 146–166, 169–189, 258–278, and 284–304; these read YIFL…YGFG, ILML…VGSF, AIIT…VMFV, WQLS…ISII, VIQI…AIFG, and GSSW…AAIL. One can recognise an ABC transmembrane type-1 domain in the interval 38-319; that stretch reads ADASMIYLIN…LTKVNVVIQK (282 aa). Positions 351 to 585 constitute an ABC transporter domain; it reads VTIKDLSFAF…GGLYTGSINR (235 aa). 383–390 serves as a coordination point for ATP; the sequence is GKSGSGKT.

This sequence belongs to the ABC transporter superfamily. Lipid exporter (TC 3.A.1.106) family. In terms of assembly, homodimer.

The protein resides in the cell membrane. The catalysed reaction is ATP + H2O + lipid A-core oligosaccharideSide 1 = ADP + phosphate + lipid A-core oligosaccharideSide 2.. Its function is as follows. Involved in lipopolysaccharide (LPS) biosynthesis. Translocates lipid A-core from the inner to the outer leaflet of the inner membrane. Transmembrane domains (TMD) form a pore in the inner membrane and the ATP-binding domain (NBD) is responsible for energy generation. This Francisella novicida protein is ATP-dependent lipid A-core flippase.